We begin with the raw amino-acid sequence, 449 residues long: Ribulose bisphosphate carboxylase large chain (449 aa).

N6,N6,N6-trimethyllysine is present on lysine 7. Substrate-binding residues include asparagine 116 and threonine 166. Lysine 168 functions as the Proton acceptor in the catalytic mechanism. A substrate-binding site is contributed by lysine 170. The Mg(2+) site is built by lysine 194, aspartate 196, and glutamate 197. Lysine 194 is subject to N6-carboxylysine. Histidine 287 acts as the Proton acceptor in catalysis. Arginine 288, histidine 320, and serine 372 together coordinate substrate.

The protein belongs to the RuBisCO large chain family. Type I subfamily. Heterohexadecamer of 8 large chains and 8 small chains; disulfide-linked. The disulfide link is formed within the large subunit homodimers. Requires Mg(2+) as cofactor. The disulfide bond which can form in the large chain dimeric partners within the hexadecamer appears to be associated with oxidative stress and protein turnover.

It is found in the plastid. Its subcellular location is the chloroplast. It catalyses the reaction 2 (2R)-3-phosphoglycerate + 2 H(+) = D-ribulose 1,5-bisphosphate + CO2 + H2O. It carries out the reaction D-ribulose 1,5-bisphosphate + O2 = 2-phosphoglycolate + (2R)-3-phosphoglycerate + 2 H(+). Functionally, ruBisCO catalyzes two reactions: the carboxylation of D-ribulose 1,5-bisphosphate, the primary event in carbon dioxide fixation, as well as the oxidative fragmentation of the pentose substrate in the photorespiration process. Both reactions occur simultaneously and in competition at the same active site. The protein is Ribulose bisphosphate carboxylase large chain of Liriope muscari (Big blue lilyturf).